The following is a 384-amino-acid chain: Prostaglandin E synthase 2 (384 aa).

The Lumenal portion of the chain corresponds to 1–56 (MAQAARLSWVLVSSRCALTEGLLTRPWQPLSAQSRAGFTRVAAGSRGAAVRKGSPR). A helical membrane pass occupies residues 57-73 (LLGAAALALGGALGLYH). Residues 74–384 (TVRWHQRSQD…VHHVNPSCKD (311 aa)) lie on the Cytoplasmic side of the membrane. The Glutaredoxin domain maps to 89 to 192 (SAAQLPLSNS…EVITYYPPMK (104 aa)). Residues Val-147 and 163–164 (DS) each bind glutathione. Positions 262-376 (YIVREGKFGA…RAIEEAPSVH (115 aa)) constitute a GST C-terminal domain.

The protein belongs to the GST superfamily. In terms of assembly, homodimer. Interacts with EXOSC10. May interact with CEBPB. In terms of processing, synthesized as a Golgi membrane-associated protein, and the proteolytic removal of the N-terminal hydrophobic domain leads to the formation of a mature cytosolic enzyme. In terms of tissue distribution, widely expressed. Expressed in brain, heart, liver, colon and lung.

The protein resides in the golgi apparatus membrane. It localises to the nucleus. The protein localises to the cytoplasm. It catalyses the reaction prostaglandin H2 = prostaglandin E2. It carries out the reaction prostaglandin H2 = (12S)-hydroxy-(5Z,8E,10E)-heptadecatrienoate + malonaldehyde. It functions in the pathway lipid metabolism; prostaglandin biosynthesis. Isomerase activity is increased by sulfhydril compounds. Dithiothreitol (DTT) is most effective, followed by glutathione (GSH) and 2-mercaptoethanol. Functionally, isomerase that catalyzes the conversion of PGH2 into the more stable prostaglandin E2 (PGE2) (in vitro). The biological function and the GSH-dependent property of PTGES2 is still under debate. In vivo, PTGES2 could form a complex with GSH and heme and would not participate in PGE2 synthesis but would catalyze the degradation of prostaglandin E2 H2 (PGH2) to 12(S)-hydroxy-5(Z),8(E),10(E)-heptadecatrienoic acid (HHT) and malondialdehyde (MDA). May also have transactivation activity toward IFN-gamma (IFNG), possibly via an interaction with CEBPB; however, the relevance of transcription activation activity remains unclear. This chain is Prostaglandin E synthase 2 (Ptges2), found in Mus musculus (Mouse).